We begin with the raw amino-acid sequence, 175 residues long: Transcription factor E (175 aa).

The HTH TFE/IIEalpha-type domain occupies Glu3–Pro88.

The protein belongs to the TFE family. In terms of assembly, monomer. Interaction with RNA polymerase subunits RpoF and RpoE is necessary for Tfe stimulatory transcription activity. Able to interact with Tbp and RNA polymerase in the absence of DNA promoter. Interacts both with the preinitiation and elongation complexes.

In terms of biological role, transcription factor that plays a role in the activation of archaeal genes transcribed by RNA polymerase. Facilitates transcription initiation by enhancing TATA-box recognition by TATA-box-binding protein (Tbp), and transcription factor B (Tfb) and RNA polymerase recruitment. Not absolutely required for transcription in vitro, but particularly important in cases where Tbp or Tfb function is not optimal. It dynamically alters the nucleic acid-binding properties of RNA polymerases by stabilizing the initiation complex and destabilizing elongation complexes. Seems to translocate with the RNA polymerase following initiation and acts by binding to the non template strand of the transcription bubble in elongation complexes. This is Transcription factor E from Methanococcus maripaludis (strain C7 / ATCC BAA-1331).